Reading from the N-terminus, the 428-residue chain is Histidine--tRNA ligase (428 aa).

It belongs to the class-II aminoacyl-tRNA synthetase family. As to quaternary structure, homodimer.

Its subcellular location is the cytoplasm. The enzyme catalyses tRNA(His) + L-histidine + ATP = L-histidyl-tRNA(His) + AMP + diphosphate + H(+). This Mesomycoplasma hyopneumoniae (strain 232) (Mycoplasma hyopneumoniae) protein is Histidine--tRNA ligase.